Here is a 317-residue protein sequence, read N- to C-terminus: MSSKTALLLLQMGGPDSLDAVHPFLMKLFTDRDIIKIGPAFLQPFIARRIVNKRAPKVEEYYRQIGGKSPIRELTEAQGEGLQQLLGEDFRSFVAMRYSRPSTIDALAAIKRAGIERVIALSLYPHYSRATTGSSVNELKRVLNESGAKFEISYIDRFYNHPLYIKALSEKVVQGLAAFPDSKDVEIVFSAHSLPQSFIEEGDPYLDHIQETVRLVMEQVGEGSHTLCFQSKASRVKWLEPSTEATIEQMAKAGKKNLLMVPLSFVSDHIETLYEIDIQYGEEAKALGIERFIRTESLNSSPLFLECLADLVKTAAK.

Histidine 192 and glutamate 271 together coordinate Fe cation.

This sequence belongs to the ferrochelatase family.

The protein localises to the cytoplasm. The enzyme catalyses heme b + 2 H(+) = protoporphyrin IX + Fe(2+). It participates in porphyrin-containing compound metabolism; protoheme biosynthesis; protoheme from protoporphyrin-IX: step 1/1. Its function is as follows. Catalyzes the ferrous insertion into protoporphyrin IX. The protein is Ferrochelatase of Geobacter sp. (strain M21).